Consider the following 196-residue polypeptide: 3-isopropylmalate dehydratase small subunit (196 aa).

This sequence belongs to the LeuD family. LeuD type 1 subfamily. As to quaternary structure, heterodimer of LeuC and LeuD.

The enzyme catalyses (2R,3S)-3-isopropylmalate = (2S)-2-isopropylmalate. It functions in the pathway amino-acid biosynthesis; L-leucine biosynthesis; L-leucine from 3-methyl-2-oxobutanoate: step 2/4. Catalyzes the isomerization between 2-isopropylmalate and 3-isopropylmalate, via the formation of 2-isopropylmaleate. This Corynebacterium diphtheriae (strain ATCC 700971 / NCTC 13129 / Biotype gravis) protein is 3-isopropylmalate dehydratase small subunit.